The chain runs to 332 residues: MILEHKQMIYTIIIGFFITLILGPLIIPFLKKLKVGQTVREEGPRSHLQKTGTPTIGGLIIIASVLVTSFTAGLINQDLWVAIGAMVAFGLIGFIDDFIKVVLKRSLGLRAYQKMSLQIIVAVFLAIYQSNISVMGTKIIVPFVKGSLTLGSFTIPQYLDLGILYIPFIVFVVVATVNSVNLTDGLDGLASGVTLIVAAFFSILAMEWGYPSLAIFAAAVTGSCLGFLRFNSHPAQVFMGDTGSLALGGAISAVAILMNVALIVPIVGGIYFAEALSVILQVISFKLTGKRIFKMSPLHHHYELSGWAETKVVIVFWIVTVILCLIGMLGLN.

8 helical membrane passes run 9-29 (IYTI…IIPF), 55-75 (TIGG…AGLI), 79-99 (LWVA…DDFI), 115-135 (MSLQ…ISVM), 155-175 (IPQY…VVVA), 196-216 (IVAA…LAIF), 253-273 (AVAI…IYFA), and 312-332 (VVIV…LGLN).

The protein belongs to the glycosyltransferase 4 family. MraY subfamily. Mg(2+) serves as cofactor.

The protein localises to the cell membrane. The catalysed reaction is UDP-N-acetyl-alpha-D-muramoyl-L-alanyl-gamma-D-glutamyl-meso-2,6-diaminopimeloyl-D-alanyl-D-alanine + di-trans,octa-cis-undecaprenyl phosphate = di-trans,octa-cis-undecaprenyl diphospho-N-acetyl-alpha-D-muramoyl-L-alanyl-D-glutamyl-meso-2,6-diaminopimeloyl-D-alanyl-D-alanine + UMP. Its pathway is cell wall biogenesis; peptidoglycan biosynthesis. Its function is as follows. Catalyzes the initial step of the lipid cycle reactions in the biosynthesis of the cell wall peptidoglycan: transfers peptidoglycan precursor phospho-MurNAc-pentapeptide from UDP-MurNAc-pentapeptide onto the lipid carrier undecaprenyl phosphate, yielding undecaprenyl-pyrophosphoryl-MurNAc-pentapeptide, known as lipid I. The sequence is that of Phospho-N-acetylmuramoyl-pentapeptide-transferase from Alkaliphilus oremlandii (strain OhILAs) (Clostridium oremlandii (strain OhILAs)).